A 60-amino-acid polypeptide reads, in one-letter code: UPF0434 protein NMC0623 (60 aa).

It belongs to the UPF0434 family.

This chain is UPF0434 protein NMC0623, found in Neisseria meningitidis serogroup C / serotype 2a (strain ATCC 700532 / DSM 15464 / FAM18).